Here is a 472-residue protein sequence, read N- to C-terminus: Kynureninase 1 (472 aa).

Pyridoxal 5'-phosphate is bound by residues leucine 146, threonine 147, 174–177 (FPSD), serine 231, aspartate 260, histidine 263, and tyrosine 285. Lysine 286 carries the post-translational modification N6-(pyridoxal phosphate)lysine. Pyridoxal 5'-phosphate-binding residues include tryptophan 326 and asparagine 354.

This sequence belongs to the kynureninase family. As to quaternary structure, homodimer. Pyridoxal 5'-phosphate is required as a cofactor.

The protein localises to the cytoplasm. It catalyses the reaction L-kynurenine + H2O = anthranilate + L-alanine + H(+). It carries out the reaction 3-hydroxy-L-kynurenine + H2O = 3-hydroxyanthranilate + L-alanine + H(+). The protein operates within amino-acid degradation; L-kynurenine degradation; L-alanine and anthranilate from L-kynurenine: step 1/1. It functions in the pathway cofactor biosynthesis; NAD(+) biosynthesis; quinolinate from L-kynurenine: step 2/3. Its function is as follows. Catalyzes the cleavage of L-kynurenine (L-Kyn) and L-3-hydroxykynurenine (L-3OHKyn) into anthranilic acid (AA) and 3-hydroxyanthranilic acid (3-OHAA), respectively. The protein is Kynureninase 1 (bna5-1) of Aspergillus niger (strain ATCC MYA-4892 / CBS 513.88 / FGSC A1513).